A 353-amino-acid chain; its full sequence is MTLQRISKDYLKPNYGLILLIVSYFFNSSMVVSTKVLENDPLETSQSRINPLQILLVRMSITYCCTLVYMHWNKQSVPDIPWGPAPCRKWLILRGIMGFFGVFGMYFSLMYLSISDAVLITFMSPTLTIFLSFLLLGEPFSKLEALGSLISFSGVVLIIRPTFLFGEQTQGQQSPQDDIVETQNPKLRLIAIGVSLLGVCGLSSVYIIIRYIGNKAHAIMSVSYFSLVTTVVAALGVLLIPSMSLQLPHSWKQWGLFLNLGISGFIHQILLTMGIQRERAGRGSLMTYTQVIYAVFWDVVLFHHWPNIWTWCGMAVIVSSTIWVINMRASKQNVVATAELLSTSDFELDDLED.

At 1–16 the chain is on the cytoplasmic side; the sequence is MTLQRISKDYLKPNYG. A helical membrane pass occupies residues 17 to 37; that stretch reads LILLIVSYFFNSSMVVSTKVL. The EamA 1 domain maps to 24–160; it reads YFFNSSMVVS…SFSGVVLIIR (137 aa). At 38–51 the chain is on the extracellular side; the sequence is ENDPLETSQSRINP. The helical transmembrane segment at 52-69 threads the bilayer; the sequence is LQILLVRMSITYCCTLVY. Topologically, residues 70-94 are cytoplasmic; it reads MHWNKQSVPDIPWGPAPCRKWLILR. A helical transmembrane segment spans residues 95–115; that stretch reads GIMGFFGVFGMYFSLMYLSIS. Residue Asp-116 is a topological domain, extracellular. Residues 117–137 traverse the membrane as a helical segment; it reads AVLITFMSPTLTIFLSFLLLG. At 138–144 the chain is on the cytoplasmic side; it reads EPFSKLE. A helical transmembrane segment spans residues 145-165; that stretch reads ALGSLISFSGVVLIIRPTFLF. Over 166 to 188 the chain is Extracellular; the sequence is GEQTQGQQSPQDDIVETQNPKLR. The chain crosses the membrane as a helical span at residues 189-209; it reads LIAIGVSLLGVCGLSSVYIII. An EamA 2 domain is found at 200–326; the sequence is CGLSSVYIII…IVSSTIWVIN (127 aa). The Cytoplasmic portion of the chain corresponds to 210 to 218; that stretch reads RYIGNKAHA. The chain crosses the membrane as a helical span at residues 219–239; that stretch reads IMSVSYFSLVTTVVAALGVLL. The Extracellular segment spans residues 240–254; that stretch reads IPSMSLQLPHSWKQW. A helical transmembrane segment spans residues 255-275; that stretch reads GLFLNLGISGFIHQILLTMGI. The Cytoplasmic portion of the chain corresponds to 276–282; sequence QRERAGR. A helical transmembrane segment spans residues 283-303; it reads GSLMTYTQVIYAVFWDVVLFH. A topological domain (extracellular) is located at residue His-304. The chain crosses the membrane as a helical span at residues 305–325; the sequence is WPNIWTWCGMAVIVSSTIWVI. The Cytoplasmic segment spans residues 326–353; sequence NMRASKQNVVATAELLSTSDFELDDLED.

It localises to the membrane. The chain is Probable transport protein YPL264C from Saccharomyces cerevisiae (strain ATCC 204508 / S288c) (Baker's yeast).